Reading from the N-terminus, the 1131-residue chain is cGMP-specific 3',5'-cyclic phosphodiesterase (1131 aa).

Disordered regions lie at residues 1-26 (MTDV…SAAT) and 42-150 (GVAP…SQQD). A compositionally biased stretch (low complexity) spans 42 to 63 (GVAPGAVPGPGSAAIPASSSSG). The segment covering 75–86 (SNNNRPAATNRS) has biased composition (polar residues). Positions 110-136 (SSSTPSQSPSPSQSPSQASIQTQTSQQ) are enriched in low complexity. GAF domains lie at 255–412 (DIDV…GIGI) and 444–625 (NLEC…GLGI). Residues 655-978 (SQDQTEKLTQ…RNWQDLAEKV (324 aa)) form the PDEase domain. His-731 acts as the Proton donor in catalysis. Residues His-735, His-771, Asp-772, and Asp-882 each coordinate a divalent metal cation. Disordered stretches follow at residues 1019-1048 (QQSQ…TGAL) and 1078-1131 (SHVS…CALL). 2 stretches are compositionally biased toward basic and acidic residues: residues 1024–1035 (GSEDSHTPEHQR) and 1078–1088 (SHVSEDMDDKS). Positions 1097-1117 (ASGSMGRMSASSSTSSAGGQM) are enriched in low complexity. Residues 1121–1131 (SKKRSKLCALL) are compositionally biased toward basic residues. The residue at position 1128 (Cys-1128) is a Cysteine methyl ester. Cys-1128 carries the S-farnesyl cysteine lipid modification. Residues 1129-1131 (ALL) constitute a propeptide, removed in mature form.

It belongs to the cyclic nucleotide phosphodiesterase family. Interacts with PrBP. The cofactor is a divalent metal cation.

The protein localises to the cell membrane. It catalyses the reaction 3',5'-cyclic GMP + H2O = GMP + H(+). Has a role regulating cGMP transport in Malpighian tubule principal cells. This chain is cGMP-specific 3',5'-cyclic phosphodiesterase, found in Drosophila erecta (Fruit fly).